A 208-amino-acid chain; its full sequence is V-type ATP synthase subunit D (208 aa).

This sequence belongs to the V-ATPase D subunit family.

In terms of biological role, produces ATP from ADP in the presence of a proton gradient across the membrane. The polypeptide is V-type ATP synthase subunit D (Streptococcus pyogenes serotype M6 (strain ATCC BAA-946 / MGAS10394)).